A 92-amino-acid polypeptide reads, in one-letter code: Sperm-specific protein Phi-1 (92 aa).

A disordered region spans residues 1–92; sequence MPSPTRRSSK…RVRAKKKKKK (92 aa). Basic residues-rich tracts occupy residues 7–19 and 29–92; these read RSSK…RSRS and AAKR…KKKK.

In terms of tissue distribution, sperm.

The protein localises to the nucleus. It is found in the chromosome. Its function is as follows. Involved in nuclear basic protein transition: histones are replaced by spermatid specific proteins which are themselves replaced by protamines in late spermatids. In Mytilus edulis (Blue mussel), this protein is Sperm-specific protein Phi-1.